The following is a 278-amino-acid chain: Large ribosomal subunit protein uL2c (278 aa).

The disordered stretch occupies residues 224-267 (VVMNPVDHPHGGGEGRAPIGRKKPLTPWGHTALGGRSRKNHKYS).

This sequence belongs to the universal ribosomal protein uL2 family. As to quaternary structure, part of the 50S ribosomal subunit.

Its subcellular location is the plastid. The protein localises to the chloroplast. This chain is Large ribosomal subunit protein uL2c (rpl2), found in Huperzia lucidula (Shining clubmoss).